We begin with the raw amino-acid sequence, 83 residues long: Cytochrome b559 subunit alpha (83 aa).

A helical membrane pass occupies residues 22–36 (VIHAVTLPAIFLAGF). Histidine 24 contacts heme.

It belongs to the PsbE/PsbF family. Heterodimer of an alpha subunit and a beta subunit. PSII is composed of 1 copy each of membrane proteins PsbA, PsbB, PsbC, PsbD, PsbE, PsbF, PsbH, PsbI, PsbJ, PsbK, PsbL, PsbM, PsbT, PsbX, PsbY, PsbZ, Psb30/Ycf12, peripheral proteins PsbO, CyanoQ (PsbQ), PsbU, PsbV and a large number of cofactors. It forms dimeric complexes. It depends on heme b as a cofactor.

It is found in the cellular thylakoid membrane. Its function is as follows. This b-type cytochrome is tightly associated with the reaction center of photosystem II (PSII). PSII is a light-driven water:plastoquinone oxidoreductase that uses light energy to abstract electrons from H(2)O, generating O(2) and a proton gradient subsequently used for ATP formation. It consists of a core antenna complex that captures photons, and an electron transfer chain that converts photonic excitation into a charge separation. The protein is Cytochrome b559 subunit alpha of Synechococcus sp. (strain RCC307).